The following is a 304-amino-acid chain: tRNA pseudouridine synthase B (304 aa).

Residue Asp-48 is the Nucleophile of the active site.

The protein belongs to the pseudouridine synthase TruB family. Type 1 subfamily.

The enzyme catalyses uridine(55) in tRNA = pseudouridine(55) in tRNA. Responsible for synthesis of pseudouridine from uracil-55 in the psi GC loop of transfer RNAs. This Pseudomonas aeruginosa (strain UCBPP-PA14) protein is tRNA pseudouridine synthase B.